We begin with the raw amino-acid sequence, 174 residues long: Adipose-secreted signaling protein (174 aa).

Position 2 is an N-acetylalanine (Ala2). Thr147 is subject to Phosphothreonine.

It belongs to the ADISSP family.

Its subcellular location is the secreted. In terms of biological role, adipocyte-secreted protein (adipokine) that acts as a key regulator for white adipose tissue (WAT) thermogenesis and glucose homeostasis at least in part through activation of protein kinase A (PKA). This Bos taurus (Bovine) protein is Adipose-secreted signaling protein.